Consider the following 217-residue polypeptide: Enoyl-CoA-hydratase (217 aa).

This sequence belongs to the enoyl-CoA hydratase/isomerase family.

It catalyses the reaction a (3S)-3-hydroxyacyl-CoA = a (2E)-enoyl-CoA + H2O. The catalysed reaction is a 4-saturated-(3S)-3-hydroxyacyl-CoA = a (3E)-enoyl-CoA + H2O. It functions in the pathway antibiotic biosynthesis; vancomycin biosynthesis. Involved in the biosynthesis of the nonproteinogenic amino acid monomer (S)-3,5-dihydroxyphenylglycine (Dpg) responsible of the production of vancomycin and teicoplanin antibiotics. Catalyzes the syn-addition of a water molecule across the double bond of a trans-2-enoyl-CoA thioester, resulting in the formation of a beta-hydroxyacyl-CoA thioester. Physiologically, DpgB could act as a dehydratase, facilitating the aromatization of the DPA-S-DgpA or DPA-S-CoA intermediate. The protein is Enoyl-CoA-hydratase (dpgB) of Amycolatopsis orientalis (Nocardia orientalis).